The chain runs to 428 residues: Spliceosome RNA helicase DDX39B (428 aa).

The segment covering 1–19 (MAENDVDNELLDYEEDEVE) has biased composition (acidic residues). A disordered region spans residues 1–35 (MAENDVDNELLDYEEDEVENAAGGDGSEAPPKKDV). Positions 45-73 (SGFRDFLLKPELLRAIVDCGFEHPSEVQH) match the Q motif motif. The Helicase ATP-binding domain maps to 76–249 (IPQAILGMDV…RKFMQDPMEI (174 aa)). An ATP-binding site is contributed by 89–96 (AKSGMGKT). Positions 196 to 199 (DECD) match the DECD box motif. The 162-residue stretch at 261–422 (GLQQYYVKLK…ELPDEIDISS (162 aa)) folds into the Helicase C-terminal domain.

It belongs to the DEAD box helicase family. DECD subfamily. In terms of assembly, component of the transcription/export (TREX) complex at least composed of ALYREF/THOC4, DDX39B, SARNP/CIP29, CHTOP and the THO subcomplex.

It localises to the nucleus. Its subcellular location is the nucleus speckle. It catalyses the reaction ATP + H2O = ADP + phosphate + H(+). Its function is as follows. Involved in nuclear export of spliced and unspliced mRNA. Component of the TREX complex which is thought to couple mRNA transcription, processing and nuclear export, and specifically associates with spliced mRNA and not with unspliced pre-mRNA. The TREX complex is recruited to spliced mRNAs by a transcription-independent mechanism, binds to mRNA upstream of the exon-junction complex (EJC) and is recruited in a splicing- and cap-dependent manner to a region near the 5' end of the mRNA where it functions in mRNA export to the cytoplasm via the TAP/NXF1 pathway. Involved in transcription elongation and genome stability. Splice factor that is required for the first ATP-dependent step in spliceosome assembly and for the interaction of U2 snRNP with the branchpoint. Has both RNA-stimulated ATP binding/hydrolysis activity and ATP-dependent RNA unwinding activity. Even with the stimulation of RNA, the ATPase activity is weak. Can only hydrolyze ATP but not other NTPs. The RNA stimulation of ATPase activity does not have a strong preference for the sequence and length of the RNA. However, ssRNA stimulates the ATPase activity much more strongly than dsRNA. Can unwind 5' or 3' overhangs or blunt end RNA duplexes in vitro. The ATPase and helicase activities are not influenced by U2AF2; the effect of ALYREF/THOC4 is reported conflictingly. This is Spliceosome RNA helicase DDX39B (DDX39B) from Gallus gallus (Chicken).